A 257-amino-acid chain; its full sequence is MPASMFSIDNILAARPRCKDSVLPVAHSAAAPVVFPALHGDSLYGASGGASSDYGAFYPRPVAPGGAGLPAAVSGSRLGYNNYFYGQLHVQAAPVGPACCGAVPPLGAQQCSCVPTPPGYEGPGSVLVSPVPHQMLPYMNVGTLSRTELQLLNQLHCRRKRRHRTIFTDEQLEALENLFQETKYPDVGTREQLARKVHLREEKVEVWFKNRRAKWRRQKRSSSEESENAEKWNKTSSSKASPEKREEEGKSDLDSDS.

Positions 160–219 (KRRHRTIFTDEQLEALENLFQETKYPDVGTREQLARKVHLREEKVEVWFKNRRAKWRRQK) form a DNA-binding region, homeobox. Positions 213 to 257 (AKWRRQKRSSSEESENAEKWNKTSSSKASPEKREEEGKSDLDSDS) are disordered. Basic and acidic residues predominate over residues 241 to 257 (SPEKREEEGKSDLDSDS).

It belongs to the paired homeobox family. Bicoid subfamily.

The protein resides in the nucleus. In terms of biological role, regulates chordin (CHRD). May play a role in spatial programing within discrete embryonic fields or lineage compartments during organogenesis. In concert with NKX3-2, plays a role in defining the structural components of the middle ear; required for the development of the entire tympanic ring. Probably involved in the regulatory networks that define neural crest cell fate specification and determine mesoderm cell lineages in mammals. This Homo sapiens (Human) protein is Homeobox protein goosecoid (GSC).